A 78-amino-acid chain; its full sequence is Large ribosomal subunit protein bL28 (78 aa).

Belongs to the bacterial ribosomal protein bL28 family.

This is Large ribosomal subunit protein bL28 from Flavobacterium psychrophilum (strain ATCC 49511 / DSM 21280 / CIP 103535 / JIP02/86).